The primary structure comprises 491 residues: Transmembrane protein 39B (491 aa).

Positions 1–56 (MAGGRRGANRTTYCRSPLSNDTGSVGNGNHSTSSPVTGVRSRTRNGSGTGMSSPPL) are disordered. 4 N-linked (GlcNAc...) asparagine glycosylation sites follow: Asn-9, Asn-20, Asn-29, and Asn-45. Composition is skewed to polar residues over residues 9-36 (NRTT…SSPV) and 44-56 (RNGS…SPPL). Transmembrane regions (helical) follow at residues 79–99 (LFEL…YVNI), 115–135 (TSLN…IVLA), 152–172 (LSFP…TLAG), 185–205 (TYSV…IPFF), 290–310 (EVLV…VWFV), 322–342 (CELF…HLLP), 423–443 (ILNI…YSLM), and 449–469 (HQTI…FKLL).

The protein belongs to the TMEM39 family. As to expression, expressed in the ovary, followed by the intestine and brain.

It is found in the endoplasmic reticulum membrane. Functionally, may protect the cells against DNA damage caused by exposure to the cold-warming stress and facilitates tissue damage repair during the recovery phase. This Danio rerio (Zebrafish) protein is Transmembrane protein 39B.